The following is a 286-amino-acid chain: Phosphate import ATP-binding protein PstB (286 aa).

The region spanning 40–281 is the ABC transporter domain; the sequence is VVAKDFSIFY…PRDRMTEDYI (242 aa). 72–79 contacts ATP; sequence GPSGCGKS.

The protein belongs to the ABC transporter superfamily. Phosphate importer (TC 3.A.1.7) family. As to quaternary structure, the complex is composed of two ATP-binding proteins (PstB), two transmembrane proteins (PstC and PstA) and a solute-binding protein (PstS).

The protein resides in the cell inner membrane. The enzyme catalyses phosphate(out) + ATP + H2O = ADP + 2 phosphate(in) + H(+). Its function is as follows. Part of the ABC transporter complex PstSACB involved in phosphate import. Responsible for energy coupling to the transport system. This Chlorobium luteolum (strain DSM 273 / BCRC 81028 / 2530) (Pelodictyon luteolum) protein is Phosphate import ATP-binding protein PstB.